The sequence spans 435 residues: Homoserine dehydrogenase (435 aa).

NADPH is bound by residues T13, V14, and K104. V14 provides a ligand contact to NAD(+). NADP(+)-binding residues include V14 and K104. Residues E128, V131, G133, and I135 each coordinate Na(+). NADP(+)-binding residues include G186 and E189. Residues E189 and D200 each contribute to the L-homoserine site. Catalysis depends on K204, which acts as the Proton donor. G301 is a binding site for NADPH. Residue G301 participates in NAD(+) binding. Position 301 (G301) interacts with NADP(+). The ACT domain maps to 354-429; the sequence is YLRVQAKDEP…CVEKPITMIR (76 aa).

This sequence belongs to the homoserine dehydrogenase family. In terms of assembly, homotetramer. The cofactor is a metal cation.

The catalysed reaction is L-homoserine + NAD(+) = L-aspartate 4-semialdehyde + NADH + H(+). Its pathway is amino-acid biosynthesis; L-methionine biosynthesis via de novo pathway; L-homoserine from L-aspartate: step 3/3. It participates in amino-acid biosynthesis; L-threonine biosynthesis; L-threonine from L-aspartate: step 3/5. With respect to regulation, neither NaCl nor KCl increase the activity. L-threonine and L-serine do not markedly inhibit the oxidation activity. Its function is as follows. Catalyzes the conversion of L-aspartate-beta-semialdehyde (L-Asa) to L-homoserine (L-Hse), the third step in the biosynthesis of threonine and methionine from aspartate. Is highly specific for NAD(+), and displays an approximate 479-fold (kcat/Km) preference for NAD(+) over NADP(+). This is Homoserine dehydrogenase from Neisseria gonorrhoeae (strain ATCC 700825 / FA 1090).